Here is a 168-residue protein sequence, read N- to C-terminus: 3-isopropylmalate dehydratase small subunit (168 aa).

The protein belongs to the LeuD family. LeuD type 2 subfamily. Heterodimer of LeuC and LeuD.

It carries out the reaction (2R,3S)-3-isopropylmalate = (2S)-2-isopropylmalate. Its pathway is amino-acid biosynthesis; L-leucine biosynthesis; L-leucine from 3-methyl-2-oxobutanoate: step 2/4. Catalyzes the isomerization between 2-isopropylmalate and 3-isopropylmalate, via the formation of 2-isopropylmaleate. This is 3-isopropylmalate dehydratase small subunit (leuD) from Sulfurisphaera tokodaii (strain DSM 16993 / JCM 10545 / NBRC 100140 / 7) (Sulfolobus tokodaii).